A 221-amino-acid polypeptide reads, in one-letter code: Transcription factor HES-4 (221 aa).

Residues 1 to 22 (MAADTPGKPSASPMAGAPASAS) show a composition bias toward low complexity. Residues 1-49 (MAADTPGKPSASPMAGAPASASRTPDKPRSAAEHRKSSKPVMEKRRRAR) form a disordered region. Basic and acidic residues predominate over residues 24-35 (TPDKPRSAAEHR). The 58-residue stretch at 34–91 (HRKSSKPVMEKRRRARINESLAQLKTLILDALRKESSRHSKLEKADILEMTVRHLRSL) folds into the bHLH domain. In terms of domain architecture, Orange spans 110–143 (YRAGFHECLAEVNRFLAGCEGVPADVRSRLLGHL). Positions 201 to 221 (LPAAPRAGPQGPGGPWRPWLR) are disordered. The WRPW motif signature appears at 216 to 219 (WRPW).

Transcription repression requires formation of a complex with a corepressor protein of the Groucho/TLE family.

The protein resides in the nucleus. Transcriptional repressor. Binds DNA on N-box motifs: 5'-CACNAG-3'. This is Transcription factor HES-4 (HES4) from Homo sapiens (Human).